A 28-amino-acid chain; its full sequence is Kappa-stichotoxin-Shd1a/kappa-stichotoxin-Shd1b (28 aa).

Position 6 is a 4-hydroxyproline; in form SHTX-1 (Shd1a) (Pro6). 2 cysteine pairs are disulfide-bonded: Cys7/Cys19 and Cys10/Cys25.

Belongs to the sea anemone BBH family. Occurs in 2 forms which differ in the post-translational modification of Pro-6. In form SHTX-1 (Shd1a) Pro-6 is a hydroxyproline while in form SHTX-2 (Shd1b) Pro-6 is unmodified.

Its subcellular location is the secreted. The protein localises to the nematocyst. In terms of biological role, kappa-stichotoxin-Shd1a: inhibits voltage-gated potassium channels (Kv). Functionally, kappa-stichotoxin-Shd1b: inhibits voltage-gated potassium channels (Kv). This toxin inhibits the binding of 125I-alpha-dendrotoxin to synaptosomal membranes (IC(50)=270 nM). This is Kappa-stichotoxin-Shd1a/kappa-stichotoxin-Shd1b from Stichodactyla haddoni (Saddle carpet anemone).